The sequence spans 318 residues: ADP-L-glycero-D-manno-heptose-6-epimerase (318 aa).

NADP(+)-binding positions include 10–11, 31–32, Lys-38, Lys-53, and 79–83; these read FI, DD, and EGACS. Tyr-144 functions as the Proton acceptor in the catalytic mechanism. Lys-148 provides a ligand contact to NADP(+). Asn-173 is a substrate binding site. Residues Val-174 and Lys-182 each contribute to the NADP(+) site. Lys-182 (proton acceptor) is an active-site residue. Substrate contacts are provided by residues Ser-184, His-191, 205–208, Arg-218, and Tyr-282; that span reads FEGC.

This sequence belongs to the NAD(P)-dependent epimerase/dehydratase family. HldD subfamily. As to quaternary structure, homopentamer. The cofactor is NADP(+).

It catalyses the reaction ADP-D-glycero-beta-D-manno-heptose = ADP-L-glycero-beta-D-manno-heptose. It participates in nucleotide-sugar biosynthesis; ADP-L-glycero-beta-D-manno-heptose biosynthesis; ADP-L-glycero-beta-D-manno-heptose from D-glycero-beta-D-manno-heptose 7-phosphate: step 4/4. Functionally, catalyzes the interconversion between ADP-D-glycero-beta-D-manno-heptose and ADP-L-glycero-beta-D-manno-heptose via an epimerization at carbon 6 of the heptose. The polypeptide is ADP-L-glycero-D-manno-heptose-6-epimerase (Aeromonas hydrophila subsp. hydrophila (strain ATCC 7966 / DSM 30187 / BCRC 13018 / CCUG 14551 / JCM 1027 / KCTC 2358 / NCIMB 9240 / NCTC 8049)).